Reading from the N-terminus, the 310-residue chain is Beta-1,3-galactosyltransferase 5 (310 aa).

The Cytoplasmic segment spans residues 1-7 (MAFPKMR). The chain crosses the membrane as a helical; Signal-anchor for type II membrane protein span at residues 8–28 (LMYICLLVLGALCLYFSMYSL). The Lumenal segment spans residues 29 to 310 (NPFKEQSFVY…NSRGEDCPPV (282 aa)). 3 N-linked (GlcNAc...) asparagine glycosylation sites follow: Asn130, Asn174, and Asn231.

It belongs to the glycosyltransferase 31 family. As to expression, expressed in stomach, jejunum, colon, pancreas, small intestine, testis and gastrointestinal and pancreatic cancer cell lines. Hardly detected in lung, liver, adrenal gland and peripheral blood leukocytes.

It is found in the golgi apparatus membrane. It carries out the reaction a globoside Gb4Cer (d18:1(4E)) + UDP-alpha-D-galactose = a globoside GalGb4Cer (d18:1(4E)) + UDP + H(+). The protein operates within protein modification; protein glycosylation. Catalyzes the transfer of Gal to GlcNAc-based acceptors with a preference for the core3 O-linked glycan GlcNAc(beta1,3)GalNAc structure. Can use glycolipid LC3Cer as an efficient acceptor. This is Beta-1,3-galactosyltransferase 5 from Homo sapiens (Human).